A 631-amino-acid chain; its full sequence is 1-deoxy-D-xylulose-5-phosphate synthase (631 aa).

Thiamine diphosphate is bound by residues H73 and 114 to 116; that span reads SHA. D145 is a binding site for Mg(2+). Thiamine diphosphate contacts are provided by residues 146-147, N175, Y286, and E368; that span reads GA. Residue N175 participates in Mg(2+) binding.

Belongs to the transketolase family. DXPS subfamily. In terms of assembly, homodimer. Requires Mg(2+) as cofactor. It depends on thiamine diphosphate as a cofactor.

It carries out the reaction D-glyceraldehyde 3-phosphate + pyruvate + H(+) = 1-deoxy-D-xylulose 5-phosphate + CO2. The protein operates within metabolic intermediate biosynthesis; 1-deoxy-D-xylulose 5-phosphate biosynthesis; 1-deoxy-D-xylulose 5-phosphate from D-glyceraldehyde 3-phosphate and pyruvate: step 1/1. In terms of biological role, catalyzes the acyloin condensation reaction between C atoms 2 and 3 of pyruvate and glyceraldehyde 3-phosphate to yield 1-deoxy-D-xylulose-5-phosphate (DXP). This chain is 1-deoxy-D-xylulose-5-phosphate synthase, found in Nocardia farcinica (strain IFM 10152).